We begin with the raw amino-acid sequence, 209 residues long: MATKVVFSLLPLLNRFDKSLLESYFQDGLRLIHYDVMDQFVHNTAFKGEYLDELKTIGFDVNVHLMVEQIIPQINFYLSQPNVKRISFHVEPFSFAKIKELIQLVKENGKEVGLAFKFTTNLQLYQPFFTTIDFITLMSVPPGKGGQAFNEAVFTNLKIANHYNLKIEIDGGIKVNNIDQIKAFVDFIVMGSGFIKLEQWQRQKLLQTI.

Position 8 (Ser-8) interacts with substrate. A divalent metal cation contacts are provided by His-33, Asp-35, His-64, and Asp-170. The active-site Proton acceptor is the Asp-35. Residues His-64, 170 to 172 (DGG), and 191 to 192 (GS) contribute to the substrate site. Catalysis depends on Asp-170, which acts as the Proton donor.

Belongs to the ribulose-phosphate 3-epimerase family. It depends on a divalent metal cation as a cofactor.

It catalyses the reaction D-ribulose 5-phosphate = D-xylulose 5-phosphate. It functions in the pathway carbohydrate degradation. Its function is as follows. Catalyzes the reversible epimerization of D-ribulose 5-phosphate to D-xylulose 5-phosphate. The polypeptide is Ribulose-phosphate 3-epimerase (Mycoplasma genitalium (strain ATCC 33530 / DSM 19775 / NCTC 10195 / G37) (Mycoplasmoides genitalium)).